The primary structure comprises 156 residues: Transcription elongation factor GreA (156 aa).

Positions 45-66 (NAEYHSAKEKQSFIEGRIKELE) form a coiled coil.

The protein belongs to the GreA/GreB family.

In terms of biological role, necessary for efficient RNA polymerase transcription elongation past template-encoded arresting sites. The arresting sites in DNA have the property of trapping a certain fraction of elongating RNA polymerases that pass through, resulting in locked ternary complexes. Cleavage of the nascent transcript by cleavage factors such as GreA or GreB allows the resumption of elongation from the new 3'terminus. GreA releases sequences of 2 to 3 nucleotides. The polypeptide is Transcription elongation factor GreA (Jannaschia sp. (strain CCS1)).